A 239-amino-acid polypeptide reads, in one-letter code: Probable transcriptional regulatory protein ACL_0044 (239 aa).

This sequence belongs to the TACO1 family.

Its subcellular location is the cytoplasm. The sequence is that of Probable transcriptional regulatory protein ACL_0044 from Acholeplasma laidlawii (strain PG-8A).